A 355-amino-acid polypeptide reads, in one-letter code: Neutral protease 2 homolog MEP6 (355 aa).

The N-terminal stretch at 1–19 (MRLSSSLIALVALAGQALA) is a signal peptide. A propeptide spanning residues 20 to 179 (LPFNELAERD…ASAIPELNKR (160 aa)) is cleaved from the precursor. Intrachain disulfides connect Cys187–Cys259 and Cys266–Cys283. His307 contacts Zn(2+). Glu308 is a catalytic residue. Zn(2+) is bound by residues His311 and Asp322.

It belongs to the peptidase M35 family. The cofactor is Zn(2+).

It localises to the secreted. It catalyses the reaction Preferential cleavage of bonds with hydrophobic residues in P1'. Also 3-Asn-|-Gln-4 and 8-Gly-|-Ser-9 bonds in insulin B chain.. In terms of biological role, secreted metalloproteinase that allows assimilation of proteinaceous substrates. Shows high activities on basic nuclear substrates such as histone and protamine. May be involved in virulence. This chain is Neutral protease 2 homolog MEP6 (MEP6), found in Coccidioides posadasii (strain C735) (Valley fever fungus).